Reading from the N-terminus, the 373-residue chain is Chaperone protein DnaJ (373 aa).

Positions 4–69 constitute a J domain; it reads DYYETLSVER…SKRRIYDTYG (66 aa). The CR-type zinc finger occupies 131 to 209; that stretch reads GVSKEVKLSR…CHGEGLVKKT (79 aa). Zn(2+) contacts are provided by cysteine 144, cysteine 147, cysteine 161, cysteine 164, cysteine 183, cysteine 186, cysteine 197, and cysteine 200. 4 CXXCXGXG motif repeats span residues 144–151, 161–168, 183–190, and 197–204; these read CWTCEGTG, CPTCNGRG, CPECEGEG, and CNDCHGEG.

It belongs to the DnaJ family. As to quaternary structure, homodimer. Requires Zn(2+) as cofactor.

It is found in the cytoplasm. Participates actively in the response to hyperosmotic and heat shock by preventing the aggregation of stress-denatured proteins and by disaggregating proteins, also in an autonomous, DnaK-independent fashion. Unfolded proteins bind initially to DnaJ; upon interaction with the DnaJ-bound protein, DnaK hydrolyzes its bound ATP, resulting in the formation of a stable complex. GrpE releases ADP from DnaK; ATP binding to DnaK triggers the release of the substrate protein, thus completing the reaction cycle. Several rounds of ATP-dependent interactions between DnaJ, DnaK and GrpE are required for fully efficient folding. Also involved, together with DnaK and GrpE, in the DNA replication of plasmids through activation of initiation proteins. This Desulfotalea psychrophila (strain LSv54 / DSM 12343) protein is Chaperone protein DnaJ.